Reading from the N-terminus, the 301-residue chain is Rhodopsin (301 aa).

Over 1-18 the chain is Extracellular; the sequence is LHMIHLHWYQYPPMNPMM. Residues 19-43 traverse the membrane as a helical segment; the sequence is YPLLLIFMLFTGILCLAGNFVTIWV. Residues 44–55 lie on the Cytoplasmic side of the membrane; that stretch reads FMNTKSLRTPAN. The helical transmembrane segment at 56–78 threads the bilayer; it reads LLVVNLAMSDFLMMFTMFPPMMV. Residues 79-92 lie on the Extracellular side of the membrane; the sequence is TCYYHTWTLGPTFC. Cysteine 92 and cysteine 169 are oxidised to a cystine. Residues 93–115 traverse the membrane as a helical segment; it reads QVYAFLGNLCGCASIWTMVFITF. Positions 116–118 match the 'Ionic lock' involved in activated form stabilization motif; the sequence is DRY. The Cytoplasmic portion of the chain corresponds to 116 to 134; sequence DRYNVIVKGVAGEPLSNKK. The helical transmembrane segment at 135 to 155 threads the bilayer; it reads AAMWILSVWVLSTAWCMAPFF. Residues 156–182 lie on the Extracellular side of the membrane; sequence GWNSYVPEGNLTGCGTDYLSEDILSRS. Asparagine 165 is a glycosylation site (N-linked (GlcNAc...) asparagine). A helical transmembrane segment spans residues 183–204; that stretch reads YLYIYSTWVYFLPLTITIYCYV. At 205–245 the chain is on the cytoplasmic side; the sequence is FIIKAVAAHEKGMRDQAKKMGIKSLRNEEAQKTSAECRLAK. A helical membrane pass occupies residues 246–267; it reads IAMTTVALWFIAWTPYLLINWV. Over 268 to 278 the chain is Extracellular; sequence GMFARSYLSPV. Residues 279-300 traverse the membrane as a helical segment; sequence YTIWGYVFAKANAVYNPIVYAI. Lysine 288 carries the N6-(retinylidene)lysine modification.

The protein belongs to the G-protein coupled receptor 1 family. Opsin subfamily. In terms of assembly, homodimer. Interacts with GNAQ. Contains one covalently linked retinal chromophore.

Its subcellular location is the cell projection. The protein resides in the rhabdomere membrane. Functionally, photoreceptor required for image-forming vision at low light intensity. Can use both retinal and 3-dehydroretinal as visual pigment. Light-induced isomerization of 11-cis to all-trans retinal triggers a conformational change that activates signaling via G-proteins. Signaling via GNAQ probably mediates the activation of phospholipase C. The sequence is that of Rhodopsin (RHO) from Faxonius virilis (Virile crayfish).